The sequence spans 266 residues: Phosphatidate cytidylyltransferase (266 aa).

8 consecutive transmembrane segments (helical) span residues 16-36, 52-72, 78-98, 101-121, 125-145, 164-184, 186-206, and 237-257; these read VVLIVVAGLILYADNLLLFWA, LFQVKASFSLYLILVLSWVAA, PVECALISAMVMASVIAYQKA, SEAILPFLYPGVGFFALFGVY, GAVAIIWLLVVVVASDVGAFF, LEGALIGVVLASVLGSFVGMG, LSGGFLMALLFSFLIALMAVF, and LDSMLFGALSLHVLLYFLEIW.

This sequence belongs to the CDS family.

The protein resides in the cell inner membrane. The enzyme catalyses a 1,2-diacyl-sn-glycero-3-phosphate + CTP + H(+) = a CDP-1,2-diacyl-sn-glycerol + diphosphate. It participates in phospholipid metabolism; CDP-diacylglycerol biosynthesis; CDP-diacylglycerol from sn-glycerol 3-phosphate: step 3/3. This is Phosphatidate cytidylyltransferase (cdsA) from Helicobacter pylori (strain J99 / ATCC 700824) (Campylobacter pylori J99).